The following is a 484-amino-acid chain: tRNA sulfurtransferase (484 aa).

The region spanning 61–165 (ILLVELLGRI…NDKMMLIKAR (105 aa)) is the THUMP domain. ATP contacts are provided by residues 183–184 (LI), Lys-265, Gly-287, and Gln-296. Cys-344 and Cys-456 form a disulfide bridge. The 81-residue stretch at 404–484 (LSANDVILDI…DNVKVLNKIS (81 aa)) folds into the Rhodanese domain. Catalysis depends on Cys-456, which acts as the Cysteine persulfide intermediate.

This sequence belongs to the ThiI family.

Its subcellular location is the cytoplasm. It carries out the reaction [ThiI sulfur-carrier protein]-S-sulfanyl-L-cysteine + a uridine in tRNA + 2 reduced [2Fe-2S]-[ferredoxin] + ATP + H(+) = [ThiI sulfur-carrier protein]-L-cysteine + a 4-thiouridine in tRNA + 2 oxidized [2Fe-2S]-[ferredoxin] + AMP + diphosphate. It catalyses the reaction [ThiS sulfur-carrier protein]-C-terminal Gly-Gly-AMP + S-sulfanyl-L-cysteinyl-[cysteine desulfurase] + AH2 = [ThiS sulfur-carrier protein]-C-terminal-Gly-aminoethanethioate + L-cysteinyl-[cysteine desulfurase] + A + AMP + 2 H(+). It participates in cofactor biosynthesis; thiamine diphosphate biosynthesis. Functionally, catalyzes the ATP-dependent transfer of a sulfur to tRNA to produce 4-thiouridine in position 8 of tRNAs, which functions as a near-UV photosensor. Also catalyzes the transfer of sulfur to the sulfur carrier protein ThiS, forming ThiS-thiocarboxylate. This is a step in the synthesis of thiazole, in the thiamine biosynthesis pathway. The sulfur is donated as persulfide by IscS. The polypeptide is tRNA sulfurtransferase (Histophilus somni (strain 129Pt) (Haemophilus somnus)).